The primary structure comprises 101 residues: Small ribosomal subunit protein uS14 (101 aa).

The protein belongs to the universal ribosomal protein uS14 family. As to quaternary structure, part of the 30S ribosomal subunit. Contacts proteins S3 and S10.

In terms of biological role, binds 16S rRNA, required for the assembly of 30S particles and may also be responsible for determining the conformation of the 16S rRNA at the A site. The chain is Small ribosomal subunit protein uS14 from Photobacterium profundum (strain SS9).